Consider the following 362-residue polypeptide: Divinyl chlorophyll a/b light-harvesting protein PcbF (362 aa).

The next 6 helical transmembrane spans lie at 27 to 47 (FIGS…ANTL), 89 to 109 (IAFI…AGLL), 150 to 170 (FILG…VEWA), 211 to 231 (VMGG…FHIA), 251 to 271 (AVLS…AFWC), and 316 to 336 (LANV…WHAI).

Belongs to the PsbB/PsbC family. IsiA/Pcb subfamily. In terms of assembly, the antenna complex consists of divinyl chlorophylls (a and b) and divinyl chlorophyll a/b binding proteins and binds more divinyl chlorophyll b than does the antenna complex from high-light-adapted Prochlorococcus. It depends on divinyl chlorophyll a as a cofactor. Divinyl chlorophyll b is required as a cofactor.

Its subcellular location is the cellular thylakoid membrane. Its function is as follows. The antenna complex functions as a light receptor, it captures and delivers excitation energy to photosystems II and I. The Prochlorales pcb genes are not related to higher plant LHCs. This Prochlorococcus marinus (strain NATL2A) protein is Divinyl chlorophyll a/b light-harvesting protein PcbF (pcbF).